The following is a 1701-amino-acid chain: Merozoite surface protein 1 (1701 aa).

An N-terminal signal peptide occupies residues 1-19 (MKIIFFLCSFLFFIINTQC). Gly residues predominate over residues 89 to 100 (GSGGSVASGGSG). The interval 89–118 (GSGGSVASGGSGNSRRTNPSDNSSDSNTKT) is disordered. Low complexity predominate over residues 101–116 (NSRRTNPSDNSSDSNT). N-linked (GlcNAc...) asparagine glycans are attached at residues Asn-110 and Asn-239. The segment at 322-344 (DAENPTTGSKPNPLPENKKKEVE) is disordered. N-linked (GlcNAc...) asparagine glycosylation is found at Asn-470, Asn-536, and Asn-607. The disordered stretch occupies residues 704-739 (SETTEDGGHSTHTLSQSGETEVTEETEVTEETVGHT). The span at 724–733 (EVTEETEVTE) shows a compositional bias: acidic residues. N-linked (GlcNAc...) asparagine glycans are attached at residues Asn-802, Asn-899, Asn-919, Asn-965, Asn-991, Asn-1089, and Asn-1196. Positions 889-927 (TGTSSTSSPGNTTVNTAQSATHSNSQNQQSNASSTNTQN) are enriched in low complexity. The tract at residues 889–936 (TGTSSTSSPGNTTVNTAQSATHSNSQNQQSNASSTNTQNGVAVSSGPA) is disordered. Disordered stretches follow at residues 1231–1259 (PPQP…TQIP) and 1451–1472 (KEKF…DEQK). Polar residues predominate over residues 1245-1259 (VSGSSGSTKEETQIP). Residues 1456–1465 (SSPPTTPPSP) are compositionally biased toward pro residues. An N-linked (GlcNAc...) asparagine glycan is attached at Asn-1588. 2 consecutive EGF-like domains span residues 1592–1632 (HQCV…VENP) and 1633–1680 (NPTC…IFCS). 6 disulfides stabilise this stretch: Cys-1594–Cys-1605, Cys-1599–Cys-1615, Cys-1617–Cys-1628, Cys-1636–Cys-1649, Cys-1643–Cys-1663, and Cys-1665–Cys-1679. Ser-1680 is lipidated: GPI-anchor amidated serine. The propeptide at 1681–1701 (SSNFLGISFLLILMLILYSFI) is removed in mature form.

In terms of assembly, forms a complex composed of subunits p83, p30, p38, and p42 which remain non-covalently associated; the complex is formed at the merozoite surface prior to egress from host erythrocytes. Forms a complex composed of processed MSP1 subunits, MSP6 subunit p36 and MSP7; the complex is formed at the merozoite surface prior to egress from host erythrocytes. Within the complex, interacts (via subunit p38) with MSP6 subunit p36 and (via subunits p83, p30 and p38) with MSP7 (via subunit p22). Forms a complex composed of MSP1, MSP6, DBLMSP1 and DBLMSP2. Within the complex, interacts (via subunit p38) with DBLMSP1 and DBLMSP2. Forms a complex composed of MSP1, and rhoptry proteins RhopH3, RAP1 and CLAG9/RhopH3. Within the complex, interacts (via subunits p42 and p19) with RhopH3 (via C-terminus). Forms a complex composed of MSP1, MSP6, MSP7, MSP9 and MSP3; within the complex, MSP6 and MSP9 mediate the binding to the host erythrocyte. Interacts (via subunits p19 and p42) with MSP9; the interaction is direct; MSP1 subunits p19 or p42, and MSP9 form a co-ligand complex that interacts with host SLC4A1/Band 3 protein. May interact with PFD6. Interacts with host spectrin. As to quaternary structure, interacts with host glycophorin GYPA in a sialic acid-independent manner. Interacts with host proinflammatory cytokine S100P; the interaction blocks S100P inflammatory and chemotactic activities. In terms of assembly, interacts with host SLC4A1/Band 3 (via 5ABC region) on the host erythrocyte surface in a sialic acid-independent manner. Post-translationally, the p190 precursor is cleaved by SUB1 prior to merozoite egress into 4 subunits p83, p30, p38, and p42 which remain non-covalently associated. SUB1-mediated proteolytic cleavage occurs in an orderly manner; the first cleavage occurs at the p30/p38 site, followed by cleavage at the p83/p30 site, in the 3D7 strain a second cleavage occurs at the N-terminus of p83, the last cleavage occurs at the p38/p42 site. The order of cleavage is essential for parasite viability. SUB1-mediated processing is essential for merozoite egress. In a second processing step during erythrocyte invasion, p42 is cleaved by SUB2 into p33 and p19; the latter remains attached to the merozoite surface via its GPI-anchor and is endocytosed during the subsequent ring stage.

Its subcellular location is the cell membrane. It is found in the secreted. It localises to the vacuole membrane. Functionally, during the asexual blood stage, involved in merozoite egress from host erythrocytes possibly via its interaction with the host cytoskeleton protein spectrin resulting in the destabilization of the host cytoskeleton and thus leading to erythrocyte cell membrane rupture. Involved in the binding to host erythrocytes and is required for host erythrocyte invasion. Its function is as follows. By binding to host proinflammatory cytokine S100P may interfere with host immune responses. Involved in merozoite invasion of host erythrocytes. May play a role in the biogenesis and/or function of the food vacuole during the intraerythrocytic development. The sequence is that of Merozoite surface protein 1 from Plasmodium falciparum (isolate FC27 / Papua New Guinea).